The chain runs to 354 residues: Protein RecA (354 aa).

An ATP-binding site is contributed by 78-85 (GPESSGKT).

This sequence belongs to the RecA family.

The protein localises to the cytoplasm. Can catalyze the hydrolysis of ATP in the presence of single-stranded DNA, the ATP-dependent uptake of single-stranded DNA by duplex DNA, and the ATP-dependent hybridization of homologous single-stranded DNAs. It interacts with LexA causing its activation and leading to its autocatalytic cleavage. In Zymomonas mobilis subsp. mobilis (strain ATCC 31821 / ZM4 / CP4), this protein is Protein RecA.